A 63-amino-acid polypeptide reads, in one-letter code: Large ribosomal subunit protein bL35 (63 aa).

This sequence belongs to the bacterial ribosomal protein bL35 family.

The polypeptide is Large ribosomal subunit protein bL35 (Finegoldia magna (strain ATCC 29328 / DSM 20472 / WAL 2508) (Peptostreptococcus magnus)).